Reading from the N-terminus, the 350-residue chain is Phosphotriesterase-related protein (350 aa).

The a divalent metal cation site is built by His-22, His-24, Glu-169, His-201, His-230, and Asp-298.

This sequence belongs to the metallo-dependent hydrolases superfamily. Phosphotriesterase family. A divalent metal cation serves as cofactor.

In Drosophila ananassae (Fruit fly), this protein is Phosphotriesterase-related protein.